Reading from the N-terminus, the 231-residue chain is Orotidine 5'-phosphate decarboxylase (231 aa).

Residues D12, K34, 61 to 70, T116, R177, Q186, G206, and R207 each bind substrate; that span reads DMKLLDIDNT. K63 functions as the Proton donor in the catalytic mechanism.

The protein belongs to the OMP decarboxylase family. Type 1 subfamily. Homodimer.

The catalysed reaction is orotidine 5'-phosphate + H(+) = UMP + CO2. It functions in the pathway pyrimidine metabolism; UMP biosynthesis via de novo pathway; UMP from orotate: step 2/2. Its function is as follows. Catalyzes the decarboxylation of orotidine 5'-monophosphate (OMP) to uridine 5'-monophosphate (UMP). The sequence is that of Orotidine 5'-phosphate decarboxylase from Allorhizobium ampelinum (strain ATCC BAA-846 / DSM 112012 / S4) (Agrobacterium vitis (strain S4)).